The chain runs to 55 residues: MAKGARDKIKLESTAGTGHFYTTTKNKRNMPEKMAIKKFDPVVRKRVEYKETKIK.

It belongs to the bacterial ribosomal protein bL33 family.

The sequence is that of Large ribosomal subunit protein bL33 from Burkholderia cenocepacia (strain ATCC BAA-245 / DSM 16553 / LMG 16656 / NCTC 13227 / J2315 / CF5610) (Burkholderia cepacia (strain J2315)).